We begin with the raw amino-acid sequence, 254 residues long: 5-oxoprolinase subunit A (254 aa).

It belongs to the LamB/PxpA family. In terms of assembly, forms a complex composed of PxpA, PxpB and PxpC.

The catalysed reaction is 5-oxo-L-proline + ATP + 2 H2O = L-glutamate + ADP + phosphate + H(+). Its function is as follows. Catalyzes the cleavage of 5-oxoproline to form L-glutamate coupled to the hydrolysis of ATP to ADP and inorganic phosphate. This chain is 5-oxoprolinase subunit A, found in Rhodopseudomonas palustris (strain BisB5).